The sequence spans 70 residues: Putative membrane protein insertion efficiency factor (70 aa).

This sequence belongs to the UPF0161 family.

The protein localises to the cell membrane. Its function is as follows. Could be involved in insertion of integral membrane proteins into the membrane. The protein is Putative membrane protein insertion efficiency factor of Rubrobacter xylanophilus (strain DSM 9941 / JCM 11954 / NBRC 16129 / PRD-1).